The following is a 229-amino-acid chain: tRNA (guanine-N(7)-)-methyltransferase (229 aa).

Positions 59, 84, 111, and 134 each coordinate S-adenosyl-L-methionine. Asp134 is an active-site residue. Lys138 is a binding site for substrate. The interaction with RNA stretch occupies residues 140-145 (KHNKRR). Substrate contacts are provided by residues Asp170 and 207-210 (TKFE).

The protein belongs to the class I-like SAM-binding methyltransferase superfamily. TrmB family.

The catalysed reaction is guanosine(46) in tRNA + S-adenosyl-L-methionine = N(7)-methylguanosine(46) in tRNA + S-adenosyl-L-homocysteine. It functions in the pathway tRNA modification; N(7)-methylguanine-tRNA biosynthesis. Its function is as follows. Catalyzes the formation of N(7)-methylguanine at position 46 (m7G46) in tRNA. The sequence is that of tRNA (guanine-N(7)-)-methyltransferase from Saccharophagus degradans (strain 2-40 / ATCC 43961 / DSM 17024).